Here is a 42-residue protein sequence, read N- to C-terminus: Potassium channel toxin gamma-KTx 1.3 (42 aa).

Cystine bridges form between Cys-5/Cys-23, Cys-11/Cys-34, Cys-20/Cys-39, and Cys-24/Cys-41.

It belongs to the ergtoxin family. Gamma-KTx 1 subfamily. In terms of tissue distribution, expressed by the venom gland.

The protein resides in the secreted. In terms of biological role, blocks Kv11/ERG potassium channels. This chain is Potassium channel toxin gamma-KTx 1.3, found in Centruroides gracilis (Slenderbrown scorpion).